Consider the following 119-residue polypeptide: Beta-2-microglobulin (119 aa).

Positions 1 to 20 are cleaved as a signal peptide; the sequence is MARFVVVALLVLLSLSGLEA. The Ig-like C1-type domain occupies 25 to 114; sequence PKIQVYSRHP…VTFSTPKTVK (90 aa). The cysteines at positions 45 and 100 are disulfide-linked.

The protein belongs to the beta-2-microglobulin family. As to quaternary structure, heterodimer of an alpha chain and a beta chain. Beta-2-microglobulin is the beta-chain of major histocompatibility complex class I molecules.

The protein localises to the secreted. In terms of biological role, component of the class I major histocompatibility complex (MHC). Involved in the presentation of peptide antigens to the immune system. The chain is Beta-2-microglobulin (B2M) from Callimico goeldii (Goeldi's marmoset).